The chain runs to 350 residues: Quinone oxidoreductase-like protein 2 (350 aa).

Lys-36 carries the N6-acetyllysine modification. The residue at position 201 (Lys-201) is an N6-succinyllysine. N6-acetyllysine is present on residues Lys-302 and Lys-328.

The protein belongs to the zinc-containing alcohol dehydrogenase family. Quinone oxidoreductase subfamily.

The chain is Quinone oxidoreductase-like protein 2 from Mus musculus (Mouse).